The chain runs to 650 residues: Probable acyl-CoA dehydrogenase FadE10 (650 aa).

Positions 1 to 23 are disordered; the sequence is MAQQTQVTEEQARALAEESRESG. The span at 10-23 shows a compositional bias: basic and acidic residues; sequence EQARALAEESRESG. Glutamate 422 acts as the Proton acceptor in catalysis.

This sequence belongs to the acyl-CoA dehydrogenase family. FAD is required as a cofactor.

It carries out the reaction a 2,3-saturated acyl-CoA + A = a 2,3-dehydroacyl-CoA + AH2. The chain is Probable acyl-CoA dehydrogenase FadE10 (fadE10) from Mycobacterium tuberculosis (strain CDC 1551 / Oshkosh).